Here is a 1646-residue protein sequence, read N- to C-terminus: Monensin-resistant homolog 2 (1646 aa).

Belongs to the MON2 family.

The protein localises to the golgi apparatus. In terms of biological role, may be required for traffic between late Golgi and early endosomes. The protein is Monensin-resistant homolog 2 (mon-2) of Caenorhabditis elegans.